The chain runs to 828 residues: Deubiquitinase MYSM1 (828 aa).

Residues 1–12 are compositionally biased toward acidic residues; sequence MAAEEADVDIEG. The disordered stretch occupies residues 1 to 31; sequence MAAEEADVDIEGDVVAAAGAQPGSGENTASV. The residue at position 110 (S110) is a Phosphoserine. The region spanning 116 to 167 is the SANT domain; that stretch reads SYSVKWTIEEKELFEQGLAKFGRRWTKISKLIGSRTVLQVKSYARQYFKNKV. K187 is covalently cross-linked (Glycyl lysine isopeptide (Lys-Gly) (interchain with G-Cter in SUMO2)). S218 is subject to Phosphoserine. At T236 the chain carries Phosphothreonine. Phosphoserine occurs at positions 242, 267, and 340. The region spanning 372 to 470 is the SWIRM domain; the sequence is LKPPEQEIEI…FGCEQAVYNR (99 aa). Residues 577 to 709 enclose the MPN domain; sequence VKVASEALLI…PLPYSQITCL (133 aa). 3 residues coordinate Zn(2+): H656, H658, and D669. The JAMM motif signature appears at 656-669; that stretch reads HSHPAFDPNPSLRD. The LXXLL motif motif lies at 774–778; it reads LQKLL.

It belongs to the peptidase M67A family. MYSM1 subfamily. As to quaternary structure, component of a large chromatin remodeling complex, at least composed of MYSM1, PCAF, RBM10 and KIF11/TRIP5. Binds histones. Interacts with NFIL3; this interaction is critical for their correct recruitment to the ID2 locus during natural killer cell maturation.

The protein resides in the nucleus. It localises to the cytoplasm. In terms of biological role, metalloprotease with deubiquitinase activity that plays important regulator roles in hematopoietic stem cell function, blood cell production and immune response. Participates in the normal programming of B-cell responses to antigen after the maturation process. Within the cytoplasm, plays critical roles in the repression of innate immunity and autoimmunity. Removes 'Lys-63'-linked polyubiquitins from TRAF3 and TRAF6 complexes. Attenuates NOD2-mediated inflammation and tissue injury by promoting 'Lys-63'-linked deubiquitination of RIPK2 component. Suppresses the CGAS-STING1 signaling pathway by cleaving STING1 'Lys-63'-linked ubiquitin chains. In the nucleus, acts as a hematopoietic transcription regulator derepressing a range of genes essential for normal stem cell differentiation including EBF1 and PAX5 in B-cells, ID2 in NK-cell progenitor or FLT3 in dendritic cell precursors. Deubiquitinates monoubiquitinated histone H2A, a specific tag for epigenetic transcriptional repression, leading to dissociation of histone H1 from the nucleosome. In Homo sapiens (Human), this protein is Deubiquitinase MYSM1 (MYSM1).